The sequence spans 644 residues: Fidgetin-like protein 2 (644 aa).

Disordered stretches follow at residues 1–36 and 285–323; these read MHWT…ELPP and AADG…GGGG. A compositionally biased stretch (polar residues) spans 10 to 27; it reads PLNQWPEQHLDVSSTTPS. A compositionally biased stretch (low complexity) spans 285–294; the sequence is AADGASYPAA. ATP-binding positions include Ala390 and 430 to 435; that span reads GCGKAL.

It belongs to the AAA ATPase family. It depends on Mg(2+) as a cofactor.

It is found in the cytoplasm. The protein resides in the cell cortex. The catalysed reaction is ATP + H2O = ADP + phosphate + H(+). Its function is as follows. Microtubule-severing enzyme that negatively regulates cell migration and wound healing. In migrating cells, targets dynamic microtubules (MTs) at the leading edge and severs them, thereby suppressing motility. Microtubule severing releases ARHGEF2 which activates RHOA, which in turn regulates focal ahesion turnover via focal adhesion kinase, as opposed to F-actin polymerization, to suppress cell motility. Negative regulator of axon regeneration that suppresses axonal growth by selectively severing dynamic MTs in the distal axon shaft and growth cone. Contributes to proper cell branching during endothelial and neuronal development. The sequence is that of Fidgetin-like protein 2 (Fignl2) from Mus musculus (Mouse).